The sequence spans 74 residues: Amphipathic peptide CT1 (74 aa).

The signal sequence occupies residues 1 to 23; the sequence is MKTQIVILFISMIMLQMFVQIEG. Valine amide is present on Val-37. Positions 41–74 are excised as a propeptide; sequence GLRNLDDLDDLDLDHLFDSDVSDADLRLLKQMFR.

It belongs to the non-disulfide-bridged peptide (NDBP) superfamily. Short antimicrobial peptide (group 4) family. As to expression, expressed by the venom gland.

The protein resides in the secreted. The protein localises to the target cell membrane. Its function is as follows. Antimicrobial peptide that is rapidly bactericidal against Gram-positive bacteria (MIC=12.5 ug/ml against S.aureus, and MIC=100 ug/ml against M.luteus). Is also active against clinical antibiotics-resistant bacterial strains. The chain is Amphipathic peptide CT1 from Scorpiops tibetanus (Scorpion).